The primary structure comprises 155 residues: Ribosome maturation factor RimP (155 aa).

Belongs to the RimP family.

It localises to the cytoplasm. Its function is as follows. Required for maturation of 30S ribosomal subunits. This is Ribosome maturation factor RimP from Staphylococcus aureus (strain bovine RF122 / ET3-1).